A 509-amino-acid chain; its full sequence is Telomeric repeat-binding factor 2-interacting protein 1 (509 aa).

The BRCT domain occupies 1–91 (MAALGGLTHS…KLLDVDDYRL (91 aa)). The segment at 93–168 (GSHGRPRKSQ…RKKENKMDCS (76 aa)) is disordered. Positions 115–127 (VGESSQESDQKQQ) are enriched in polar residues. The span at 159 to 168 (RKKENKMDCS) shows a compositional bias: basic and acidic residues. One can recognise a Myb-like domain in the interval 185–239 (RRNVFTEKEDVAIMLYVRENAPHRGTGVSLWKEMEQKQVVKRTWQAIKNRYFRYL). Disordered stretches follow at residues 249–359 (LTDD…ENQD) and 399–423 (DLPSSQSQTQVDEVSSSPDASESEG). 2 stretches are compositionally biased toward basic and acidic residues: residues 286–296 (GVAEKTGEKLS) and 321–344 (VEERGQEVTEGAIKRSEGNKKSTE). The span at 401-418 (PSSQSQTQVDEVSSSPDA) shows a compositional bias: polar residues. A Nuclear localization signal motif is present at residues 493 to 509 (QKYGADNVAKRVAFLAS).

Belongs to the RAP1 family. As to quaternary structure, homodimer. Component of the shelterin complex (telosome). Interacts with terf2; the interaction is direct.

It localises to the nucleus. Its subcellular location is the chromosome. The protein localises to the telomere. Acts both as a regulator of telomere function and as a transcription regulator. Involved in the regulation of telomere length and protection as a component of the shelterin complex (telosome). Does not bind DNA directly: recruited to telomeric double-stranded 5'-TTAGGG-3' repeats via its interaction with terf2. Independently of its function in telomeres, also acts as a transcription regulator: recruited to extratelomeric 5'-TTAGGG-3' sites via its association with terf2 or other factors, and regulates gene expression. The sequence is that of Telomeric repeat-binding factor 2-interacting protein 1 (terf2ip) from Xenopus tropicalis (Western clawed frog).